Reading from the N-terminus, the 1697-residue chain is Histone acetyltransferase HAC1 (1697 aa).

Residues 1–16 (MNVQAHMSGQVSNQGT) are compositionally biased toward polar residues. Disordered regions lie at residues 1 to 45 (MNVQ…LGPS), 202 to 221 (SNFGLGSGGNMSSMSSQRNT), 385 to 439 (SFQA…QQQR), 555 to 574 (HWQSQSQEHTQMSNSMSNER), 583 to 631 (RMSG…GNRD), and 843 to 901 (IGIA…GKPE). 2 stretches are compositionally biased toward low complexity: residues 17–28 (MSQQNGNSQMQN) and 202–217 (SNFGLGSGGNMSSMSS). Polar residues predominate over residues 385-398 (SFQAVSRTSSSLSH). Low complexity predominate over residues 399 to 439 (QQQQFQQQPNRFQQQPNQFHQQQQQFLHQQQLKQQSQQQQR). Polar residues-rich tracts occupy residues 556–571 (WQSQSQEHTQMSNSMS) and 584–628 (MSGT…NGNG). The TAZ-type 1 zinc-finger motif lies at 629 to 709 (NRDPRFKNQQ…EPNCPVCIPV (81 aa)). The segment covering 873–901 (TKVEKEPESLKKENLAESTEHTSKSGKPE) has biased composition (basic and acidic residues). The PHD-type zinc-finger motif lies at 989-1066 (HYFCIPCYNE…EYTCPYCFIA (78 aa)). A CBP/p300-type HAT domain is found at 1081 to 1517 (VLGAKDLPRT…VLYHLHNPTA (437 aa)). Residues 1204-1206 (LDS), 1223-1224 (RT), and Trp-1279 each bind acetyl-CoA. 2 consecutive ZZ-type zinc fingers follow at residues 1399–1462 (HLQP…IMDI) and 1519–1572 (AFVT…SLAD). 16 residues coordinate Zn(2+): Cys-1404, Cys-1407, Cys-1419, Cys-1422, Cys-1428, Cys-1431, His-1444, His-1452, Cys-1524, Cys-1527, Cys-1539, Cys-1542, Cys-1548, Cys-1551, His-1560, and His-1562. The TAZ-type 2 zinc finger occupies 1579–1662 (EARQLRVLQL…ECHVPRCRDL (84 aa)).

In terms of tissue distribution, rosette leaves, stems and flowers.

It localises to the nucleus. It carries out the reaction L-lysyl-[protein] + acetyl-CoA = N(6)-acetyl-L-lysyl-[protein] + CoA + H(+). Its function is as follows. Acetyltransferase enzyme. Acetylates histones, giving a specific tag for transcriptional activation. In Arabidopsis thaliana (Mouse-ear cress), this protein is Histone acetyltransferase HAC1 (HAC1).